We begin with the raw amino-acid sequence, 150 residues long: Large ribosomal subunit protein bL9 (150 aa).

Belongs to the bacterial ribosomal protein bL9 family.

In terms of biological role, binds to the 23S rRNA. The protein is Large ribosomal subunit protein bL9 of Mycoplasmopsis pulmonis (strain UAB CTIP) (Mycoplasma pulmonis).